A 735-amino-acid polypeptide reads, in one-letter code: Translation factor GUF1 homolog, chloroplastic (735 aa).

Disordered regions lie at residues 1 to 38 (MAVP…PSTS) and 106 to 126 (PENA…GVDN). A chloroplast-targeting transit peptide spans 1–47 (MAVPTIPSPACISQSANGSIISTRRSTETNPRQHPSTSYRCAGRVVR). Over residues 11–38 (CISQSANGSIISTRRSTETNPRQHPSTS) the composition is skewed to polar residues. Positions 106 to 115 (PENAEKDYSK) are enriched in basic and acidic residues. In terms of domain architecture, tr-type G spans 137 to 319 (SNIRNFSIIA…AVVKKIPPPK (183 aa)). GTP is bound by residues 146-153 (AHIDHGKS), 212-216 (DTPGH), and 266-269 (NKID).

Belongs to the TRAFAC class translation factor GTPase superfamily. Classic translation factor GTPase family. LepA subfamily.

It localises to the plastid. It is found in the chloroplast. It catalyses the reaction GTP + H2O = GDP + phosphate + H(+). Promotes chloroplast protein synthesis. May act as a fidelity factor of the translation reaction, by catalyzing a one-codon backward translocation of tRNAs on improperly translocated ribosomes. This chain is Translation factor GUF1 homolog, chloroplastic, found in Physcomitrium patens (Spreading-leaved earth moss).